We begin with the raw amino-acid sequence, 351 residues long: C-X-C chemokine receptor type 1 (351 aa).

Over 1–46 (MSNATDPQMGDDDYDLNFTGMPPTDEDYSPCRLETQSLNKYVVIVT) the chain is Extracellular. N-linked (GlcNAc...) asparagine glycans are attached at residues Asn3 and Asn17. Residues 47-67 (YALVFLLSLLGNSLVMLVILY) form a helical membrane-spanning segment. At 68–76 (RRVGRSVTD) the chain is on the cytoplasmic side. The helical transmembrane segment at 77-97 (VYLLNLAMADLLFALTLPIWA) threads the bilayer. At 98–112 (ASKVNGWIFGTFLCK) the chain is on the extracellular side. Cys111 and Cys188 are oxidised to a cystine. The helical transmembrane segment at 113–133 (VVSLLKEVNFYSGILLLACIS) threads the bilayer. Topologically, residues 134–154 (VDRYLAIVHATRTLIQKRHSV) are cytoplasmic. The chain crosses the membrane as a helical span at residues 155-175 (KFVCLSCWGLSVILSLPFFLF). Over 176-204 (RQAYHPNNSTPVCYEVLGNDTAKWRMVLR) the chain is Extracellular. Residues Asn182 and Asn194 are each glycosylated (N-linked (GlcNAc...) asparagine). Residues 205 to 225 (ILPHTFGFTLPLLIMLFCYGF) form a helical membrane-spanning segment. At 226–243 (TLHTLFKAHIGQKHRAMR) the chain is on the cytoplasmic side. A helical transmembrane segment spans residues 244 to 264 (VIFAVVLIFLLCWLPYNLVLL). At 265–289 (ADTLMRTHLIKESCERRNDIGRALD) the chain is on the extracellular side. The chain crosses the membrane as a helical span at residues 290–310 (ATEILGFLHSCLNPIIYAFIG). Topologically, residues 311–351 (QNFRHGFLKILATHGLVSKEFLARHHVTSYTSSSVNVSSNL) are cytoplasmic.

This sequence belongs to the G-protein coupled receptor 1 family. In terms of assembly, interacts with IL8. Interacts with GNAI2.

The protein localises to the cell membrane. Its function is as follows. Receptor to interleukin-8, which is a powerful neutrophils chemotactic factor. Binding of IL-8 to the receptor causes activation of neutrophils. This response is mediated via a G-protein that activates a phosphatidylinositol-calcium second messenger system. This chain is C-X-C chemokine receptor type 1 (CXCR1), found in Macaca mulatta (Rhesus macaque).